We begin with the raw amino-acid sequence, 209 residues long: Ribonuclease HII (209 aa).

Residues 18–209 (SLVAGVDEVG…FKPVKALLER (192 aa)) form the RNase H type-2 domain. Positions 24, 25, and 116 each coordinate a divalent metal cation.

The protein belongs to the RNase HII family. Mn(2+) serves as cofactor. It depends on Mg(2+) as a cofactor.

It is found in the cytoplasm. It carries out the reaction Endonucleolytic cleavage to 5'-phosphomonoester.. Functionally, endonuclease that specifically degrades the RNA of RNA-DNA hybrids. The chain is Ribonuclease HII from Shewanella oneidensis (strain ATCC 700550 / JCM 31522 / CIP 106686 / LMG 19005 / NCIMB 14063 / MR-1).